Consider the following 198-residue polypeptide: Molybdopterin synthase catalytic subunit (198 aa).

Substrate is bound by residues 107 to 108, lysine 123, and 130 to 132; these read HR and KKE.

It belongs to the MoaE family. MOCS2B subfamily. Heterotetramer; composed of 2 small (MOCS2A) and 2 large (MOCS2B) subunits.

Its subcellular location is the cytoplasm. The enzyme catalyses 2 [molybdopterin-synthase sulfur-carrier protein]-C-terminal-Gly-aminoethanethioate + cyclic pyranopterin phosphate + H2O = molybdopterin + 2 [molybdopterin-synthase sulfur-carrier protein]-C-terminal Gly-Gly + 2 H(+). The protein operates within cofactor biosynthesis; molybdopterin biosynthesis. In terms of biological role, catalytic subunit of the molybdopterin synthase complex, a complex that catalyzes the conversion of precursor Z into molybdopterin. Acts by mediating the incorporation of 2 sulfur atoms from thiocarboxylated MOCS2A into precursor Z to generate a dithiolene group. In Arabidopsis thaliana (Mouse-ear cress), this protein is Molybdopterin synthase catalytic subunit.